Reading from the N-terminus, the 394-residue chain is RNA binding protein fox-1 homolog 2 (394 aa).

Disordered regions lie at residues 1–70 (MGRL…DYAG) and 83–135 (TQAH…HVSN). Composition is skewed to polar residues over residues 24–36 (RDSQ…TTTP) and 83–103 (TQAH…SLTT). Positions 105-125 (GGAQTDGQQSQTQSSENSESK) are enriched in low complexity. Positions 129–205 (KRLHVSNIPF…RKIEVNNATA (77 aa)) constitute an RRM domain. Arg-285 carries the omega-N-methylarginine modification. Asymmetric dimethylarginine occurs at positions 301 and 333. Asymmetric dimethylarginine; alternate is present on residues Arg-385 and Arg-390. An omega-N-methylarginine; alternate mark is found at Arg-385 and Arg-390.

As to quaternary structure, interacts with ER-alpha N-terminal activation domain. Interacts with RBPMS; the interaction allows cooperative assembly of stable cell-specific alternative splicing regulatory complexes.

It localises to the nucleus. It is found in the cytoplasm. Its function is as follows. RNA-binding protein that regulates alternative splicing events by binding to 5'-UGCAUGU-3' elements. Prevents binding of U2AF2 to the 3'-splice site. Regulates alternative splicing of tissue-specific exons and of differentially spliced exons during erythropoiesis. Seems to act as a coregulatory factor of ER-alpha. Together with RNA binding proteins RBPMS and MBNL1/2, activates vascular smooth muscle cells alternative splicing events. This is RNA binding protein fox-1 homolog 2 (RBFOX2) from Bos taurus (Bovine).